Consider the following 417-residue polypeptide: Autophagy-related protein 18 (417 aa).

WD repeat units lie at residues 1–36 (MSMN…KSYE), 76–114 (ELTF…LVYT), 185–225 (AHKS…KLYQ), and 230–269 (SMPS…GLSK). The short motif at 226-230 (FRRGS) is the L/FRRG motif element. The tract at residues 267–300 (LSKTSSPSRKLESSRGSGDESAVESASSEMSSRK) is disordered. A compositionally biased stretch (low complexity) spans 285-296 (DESAVESASSEM). 2 WD repeats span residues 300–346 (KHNG…AWIK) and 355–395 (GGSG…GGEG).

This sequence belongs to the WD repeat PROPPIN family. As to quaternary structure, component of the PI(3,5)P2 regulatory complex.

The protein resides in the preautophagosomal structure membrane. It localises to the vacuole membrane. Its subcellular location is the endosome membrane. Its function is as follows. The PI(3,5)P2 regulatory complex regulates both the synthesis and turnover of phosphatidylinositol 3,5-bisphosphate (PtdIns(3,5)P2). Necessary for proper vacuole morphology. Plays an important role in osmotically-induced vacuole fragmentation. Required for cytoplasm to vacuole transport (Cvt) vesicle formation, pexophagy and starvation-induced autophagy. Involved in correct ATG9 trafficking to the pre-autophagosomal structure. Might also be involved in premeiotic DNA replication. The chain is Autophagy-related protein 18 (ATG18) from Coccidioides immitis (strain RS) (Valley fever fungus).